We begin with the raw amino-acid sequence, 108 residues long: Small ribosomal subunit protein bS18 (108 aa).

The span at 1–12 shows a compositional bias: polar residues; it reads MSDITKQPANNI. The interval 1 to 33 is disordered; the sequence is MSDITKQPANNISSDDKKEVAKASAKSSVEGAK.

This sequence belongs to the bacterial ribosomal protein bS18 family. As to quaternary structure, part of the 30S ribosomal subunit. Forms a tight heterodimer with protein bS6.

Its function is as follows. Binds as a heterodimer with protein bS6 to the central domain of the 16S rRNA, where it helps stabilize the platform of the 30S subunit. The chain is Small ribosomal subunit protein bS18 from Mycoplasmoides gallisepticum (strain R(low / passage 15 / clone 2)) (Mycoplasma gallisepticum).